The primary structure comprises 323 residues: MKTTFLDFEQPIAELEAKIEELRFVQDDSAVDISEEIERLSKKSQQLTKDLYTNLTPWQVSQIARHPQRPYTQDYINELFTDFHELHGDRSFADDLSIVGGLARFNGQPCMVIGHQKGRDTKERALRNFGMPRPEGYRKAERLMRLAEKFGLPLFTFIDTPGAYPGIGAEERGQSEAIGRNLYVMAELKTPIISTVIGEGGSGGALAVAVADSVLMLQFSTYSVISPEGCASILWKSAAKAPEAAEALGLTAHRLKALGLIDKIVSEPLGGAHRDPKGMAAMLRRALADSLRQFHGMSTNDLRQRRFDRLMAYGKFKETTPGA.

In terms of domain architecture, CoA carboxyltransferase C-terminal spans 39 to 293; sequence RLSKKSQQLT…RRALADSLRQ (255 aa).

The protein belongs to the AccA family. As to quaternary structure, acetyl-CoA carboxylase is a heterohexamer composed of biotin carboxyl carrier protein (AccB), biotin carboxylase (AccC) and two subunits each of ACCase subunit alpha (AccA) and ACCase subunit beta (AccD).

The protein resides in the cytoplasm. It carries out the reaction N(6)-carboxybiotinyl-L-lysyl-[protein] + acetyl-CoA = N(6)-biotinyl-L-lysyl-[protein] + malonyl-CoA. Its pathway is lipid metabolism; malonyl-CoA biosynthesis; malonyl-CoA from acetyl-CoA: step 1/1. In terms of biological role, component of the acetyl coenzyme A carboxylase (ACC) complex. First, biotin carboxylase catalyzes the carboxylation of biotin on its carrier protein (BCCP) and then the CO(2) group is transferred by the carboxyltransferase to acetyl-CoA to form malonyl-CoA. This Paraburkholderia phymatum (strain DSM 17167 / CIP 108236 / LMG 21445 / STM815) (Burkholderia phymatum) protein is Acetyl-coenzyme A carboxylase carboxyl transferase subunit alpha.